We begin with the raw amino-acid sequence, 316 residues long: Tyrosine recombinase XerD (316 aa).

One can recognise a Core-binding (CB) domain in the interval 4-97 (AALQTQLQGY…AVRGLHRFAV (94 aa)). Residues 118 to 309 (RLPKSLTVDE…TVQALREVWA (192 aa)) form the Tyr recombinase domain. Catalysis depends on residues R162, K186, H261, R264, and H287. Y296 serves as the catalytic O-(3'-phospho-DNA)-tyrosine intermediate.

The protein belongs to the 'phage' integrase family. XerD subfamily. Forms a cyclic heterotetrameric complex composed of two molecules of XerC and two molecules of XerD.

Its subcellular location is the cytoplasm. In terms of biological role, site-specific tyrosine recombinase, which acts by catalyzing the cutting and rejoining of the recombining DNA molecules. The XerC-XerD complex is essential to convert dimers of the bacterial chromosome into monomers to permit their segregation at cell division. It also contributes to the segregational stability of plasmids. The protein is Tyrosine recombinase XerD of Mycobacterium leprae (strain TN).